The chain runs to 156 residues: ATP synthase subunit b (156 aa).

The chain crosses the membrane as a helical span at residues 11-31; it reads AIAFAVFVWFCMKYVWPPLLA.

Belongs to the ATPase B chain family. In terms of assembly, F-type ATPases have 2 components, F(1) - the catalytic core - and F(0) - the membrane proton channel. F(1) has five subunits: alpha(3), beta(3), gamma(1), delta(1), epsilon(1). F(0) has three main subunits: a(1), b(2) and c(10-14). The alpha and beta chains form an alternating ring which encloses part of the gamma chain. F(1) is attached to F(0) by a central stalk formed by the gamma and epsilon chains, while a peripheral stalk is formed by the delta and b chains.

Its subcellular location is the cell inner membrane. Functionally, f(1)F(0) ATP synthase produces ATP from ADP in the presence of a proton or sodium gradient. F-type ATPases consist of two structural domains, F(1) containing the extramembraneous catalytic core and F(0) containing the membrane proton channel, linked together by a central stalk and a peripheral stalk. During catalysis, ATP synthesis in the catalytic domain of F(1) is coupled via a rotary mechanism of the central stalk subunits to proton translocation. In terms of biological role, component of the F(0) channel, it forms part of the peripheral stalk, linking F(1) to F(0). This Psychromonas ingrahamii (strain DSM 17664 / CCUG 51855 / 37) protein is ATP synthase subunit b.